The sequence spans 363 residues: LIM and cysteine-rich domains protein 1 (363 aa).

The residue at position 16 (serine 16) is a Phosphoserine. In terms of domain architecture, PET spans 99 to 206 (MIMTNPIATG…GEVALPGQGG (108 aa)). The disordered stretch occupies residues 200–234 (ALPGQGGLPKEEGKQQEKPEGAETAPPTTNGSIGD). The span at 208 to 220 (PKEEGKQQEKPEG) shows a compositional bias: basic and acidic residues. 2 LIM zinc-binding domains span residues 239 to 304 (YVCE…SLRP) and 305 to 363 (RCSG…SKRS).

In terms of assembly, interacts with beta-dystroglycan. Interacts with GATA1, GATA4 and GATA6.

The protein resides in the cytoplasm. It localises to the nucleus. In terms of biological role, transcriptional cofactor that restricts GATA6 function by inhibiting DNA-binding, resulting in repression of GATA6 transcriptional activation of downstream target genes. Represses GATA6-mediated trans activation of lung- and cardiac tissue-specific promoters. Inhibits DNA-binding by GATA4 and GATA1 to the cTNC promoter. Plays a critical role in the development of cardiac hypertrophy via activation of calcineurin/nuclear factor of activated T-cells signaling pathway. This chain is LIM and cysteine-rich domains protein 1 (LMCD1), found in Bos taurus (Bovine).